Consider the following 281-residue polypeptide: uncharacterized protein (281 aa).

Its subcellular location is the plastid. It localises to the chloroplast. This is an uncharacterized protein from Euglena gracilis.